Reading from the N-terminus, the 501-residue chain is Geissoschizine oxidase (501 aa).

Residues Met-1–Val-21 form a helical membrane-spanning segment. Asn-60 is a glycosylation site (N-linked (GlcNAc...) asparagine). Cys-442 lines the heme pocket.

It belongs to the cytochrome P450 family. The cofactor is heme. Expressed in leaf epidermis. Also present in the leaf internal phloem-associated parenchyma (IPAP) inside the mesophyll.

The protein localises to the membrane. The enzyme catalyses (19E)-geissoschizine + reduced [NADPH--hemoprotein reductase] + O2 = akuammicine + formate + oxidized [NADPH--hemoprotein reductase] + H2O + H(+). It catalyses the reaction (19E)-geissoschizine + reduced [NADPH--hemoprotein reductase] + O2 = 3,17-didehydrostemmadenine + oxidized [NADPH--hemoprotein reductase] + 2 H2O. It functions in the pathway alkaloid biosynthesis. In terms of biological role, component of the seco-iridoid and derivatives monoterpenoid indole alkaloids (MIAs, e.g. vincristine, quinine, and strychnine) biosynthesis pathway. Catalyzes the oxidation of 19E-geissoschizine to produce a short-lived MIA unstable intermediate which can be spontaneously converted into akuammicine or oxidized by Redox1 and Redox2 to produce stemmadenine and 16S/R-deshydroxymethylstemmadenine (16S/R-DHS). The sequence is that of Geissoschizine oxidase from Catharanthus roseus (Madagascar periwinkle).